The primary structure comprises 260 residues: MSTNNSVLVLKVGGALLQCEMGMARLMDTAAAMLANGQQVLMVHGGGCLVDEQLAANGMETVKLEGLRVTPPEQMPIIAGALAGTSNKILQGAATKAGIVSVGMSLADGNTVSAKIKDERLGLVGEVTPKDGTYLKFILEQGWMPICSSIAMMDDGQMLNVNADQAATALAKLVGGKLVLLSDVSGVLDGKGQLIHSLNGKQIADLVKQGVIEKGMKVKVEAALEVAQWMGQAVQVASWRDASQLIALAKGEAVGTQIQP.

Substrate contacts are provided by residues 46 to 47 (GG), R68, and N160.

It belongs to the acetylglutamate kinase family. ArgB subfamily.

The protein resides in the cytoplasm. It catalyses the reaction N-acetyl-L-glutamate + ATP = N-acetyl-L-glutamyl 5-phosphate + ADP. It functions in the pathway amino-acid biosynthesis; L-arginine biosynthesis; N(2)-acetyl-L-ornithine from L-glutamate: step 2/4. Functionally, catalyzes the ATP-dependent phosphorylation of N-acetyl-L-glutamate. This is Acetylglutamate kinase from Shewanella sp. (strain W3-18-1).